The sequence spans 762 residues: Probable inorganic carbon transporter subunit DabA (762 aa).

Zn(2+)-binding residues include cysteine 279, aspartate 281, histidine 461, and cysteine 476.

It belongs to the inorganic carbon transporter (TC 9.A.2) DabA family. As to quaternary structure, forms a complex with DabB. The cofactor is Zn(2+).

Its subcellular location is the cell inner membrane. Part of an energy-coupled inorganic carbon pump. This Legionella pneumophila (strain Corby) protein is Probable inorganic carbon transporter subunit DabA.